A 61-amino-acid polypeptide reads, in one-letter code: Large ribosomal subunit protein bL32 (61 aa).

A compositionally biased stretch (basic residues) spans 1 to 16; that stretch reads MAVPKRKTSPSKRGMR. Positions 1-40 are disordered; sequence MAVPKRKTSPSKRGMRRSADALKAPTYIEDKNSGELRRPH. Positions 28-40 are enriched in basic and acidic residues; it reads IEDKNSGELRRPH.

It belongs to the bacterial ribosomal protein bL32 family.

The protein is Large ribosomal subunit protein bL32 of Sinorhizobium medicae (strain WSM419) (Ensifer medicae).